Here is a 1212-residue protein sequence, read N- to C-terminus: Dermatan-sulfate epimerase-like protein (1212 aa).

Positions Met1 to Ser20 are cleaved as a signal peptide. Asn28, Asn666, Asn688, and Asn709 each carry an N-linked (GlcNAc...) asparagine glycan. 2 helical membrane passes run Ile764 to Leu784 and Trp803 to Cys823. An N-linked (GlcNAc...) asparagine glycan is attached at Asn874.

The protein belongs to the dermatan-sulfate isomerase family. Expressed in different brain areas as well as in multiple other peripheral tissues.

The protein resides in the membrane. The chain is Dermatan-sulfate epimerase-like protein (DSEL) from Homo sapiens (Human).